A 137-amino-acid polypeptide reads, in one-letter code: Cytochrome c-type biogenesis protein CcmE (137 aa).

Residues 1–8 (MQKGAKNR) are Cytoplasmic-facing. A helical; Signal-anchor for type II membrane protein transmembrane segment spans residues 9-29 (LITIIICFCSAVIGVSIILYN). At 30-137 (LEKSIVFFVP…NTVIPAKAGI (108 aa)) the chain is on the periplasmic side. Positions 120 and 124 each coordinate heme.

Belongs to the CcmE/CycJ family.

It is found in the cell inner membrane. Functionally, heme chaperone required for the biogenesis of c-type cytochromes. Transiently binds heme delivered by CcmC and transfers the heme to apo-cytochromes in a process facilitated by CcmF and CcmH. This Rickettsia bellii (strain OSU 85-389) protein is Cytochrome c-type biogenesis protein CcmE.